The sequence spans 92 residues: Small ribosomal subunit protein uS19 (92 aa).

Belongs to the universal ribosomal protein uS19 family.

Its function is as follows. Protein S19 forms a complex with S13 that binds strongly to the 16S ribosomal RNA. In Yersinia pestis (strain Pestoides F), this protein is Small ribosomal subunit protein uS19.